Here is a 148-residue protein sequence, read N- to C-terminus: Small ribosomal subunit protein eS6 (148 aa).

The protein belongs to the eukaryotic ribosomal protein eS6 family.

The chain is Small ribosomal subunit protein eS6 from Pyrobaculum islandicum (strain DSM 4184 / JCM 9189 / GEO3).